The chain runs to 380 residues: Cytochrome b (380 aa).

The next 4 helical transmembrane spans lie at Phe34–Met54, Trp78–Ile99, Trp114–Leu134, and Phe179–Leu199. Residues His84 and His98 each contribute to the heme b site. Heme b-binding residues include His183 and His197. A ubiquinone is bound at residue His202. 4 helical membrane passes run Tyr227 to Thr247, Leu289 to His309, Ile321 to Gly341, and Phe348 to Pro368.

The protein belongs to the cytochrome b family. In terms of assembly, the cytochrome bc1 complex contains 3 respiratory subunits (MT-CYB, CYC1 and UQCRFS1), 2 core proteins (UQCRC1 and UQCRC2) and probably 6 low-molecular weight proteins. Heme b serves as cofactor.

It is found in the mitochondrion inner membrane. In terms of biological role, component of the ubiquinol-cytochrome c reductase complex (complex III or cytochrome b-c1 complex) that is part of the mitochondrial respiratory chain. The b-c1 complex mediates electron transfer from ubiquinol to cytochrome c. Contributes to the generation of a proton gradient across the mitochondrial membrane that is then used for ATP synthesis. This chain is Cytochrome b (mt-cyb), found in Hemitrygon laosensis (Mekong freshwater stingray).